We begin with the raw amino-acid sequence, 385 residues long: Mannitol-1-phosphate 5-dehydrogenase (385 aa).

3–14 provides a ligand contact to NAD(+); that stretch reads ALHFGAGNIGRG.

Belongs to the mannitol dehydrogenase family.

It carries out the reaction D-mannitol 1-phosphate + NAD(+) = beta-D-fructose 6-phosphate + NADH + H(+). This chain is Mannitol-1-phosphate 5-dehydrogenase, found in Pasteurella multocida (strain Pm70).